Consider the following 234-residue polypeptide: Sugar fermentation stimulation protein A (234 aa).

The H-T-H motif DNA-binding region spans leucine 201–serine 220.

This sequence belongs to the SfsA family.

Its function is as follows. Binds to DNA non-specifically. Could be a regulatory factor involved in maltose metabolism. This Shigella dysenteriae serotype 1 (strain Sd197) protein is Sugar fermentation stimulation protein A.